The sequence spans 505 residues: Pentatricopeptide repeat-containing protein At2g17033 (505 aa).

3 PPR repeats span residues 243 to 277 (KTQAYKSMVSGLCNMDQPHDAERVIEEMRMEKIKP), 278 to 312 (GLFEYKSVLYGYGRLGLFDDMNRVVHRMGTEGHKI), and 313 to 347 (DTVCSNMVLSSYGAHDALPQMGSWLQKLKGFNVPF). In terms of domain architecture, Smr spans 413–503 (LDLHGMHLSS…AKGKTVKEWL (91 aa)).

This sequence belongs to the PPR family. P subfamily.

This is Pentatricopeptide repeat-containing protein At2g17033 from Arabidopsis thaliana (Mouse-ear cress).